The chain runs to 409 residues: MRSPPREARLRMAVEAIGKNKNLSIRAAARQYNVPEATIRHRCTGRSARRDLPANSRKLTDLEERTIVQYILELDARAFPPRLRGVEDMANHLLRERDAPPVGKLWAHNFVKRQPQLRTRRTRRYDYQRAKCEDPKVIGEWFTLVQDAKAKYGIVDDDVYNFDETGLMMGIIFAGQAYGRLIDELMRAHINHITKLEFLCAFREAFFASMTEKNIQGGFSGAGIVPFDPERVLSKLDVKLHTPTHPDSRPGTAQPWASKTPYNAQETRSQSDFIKTRISSYQNSSPASVLVAVDQLTKGATAVMHQVALLQSEVSSLRKANEPLSKRRKAKRTRIQLGGPLTVQDAQDPLDQRDVGKGALQETQPDSSGAGGARAKVRRCNSCCKVGESASLAYMRRSLIIYVRSYNDF.

Residues 51-120 (DLPANSRKLT…VKRQPQLRTR (70 aa)) enclose the HTH CENPB-type domain. Positions 84-113 (RGVEDMANHLLRERDAPPVGKLWAHNFVKR) form a DNA-binding region, H-T-H motif. 2 disordered regions span residues 243-269 (PTHP…ETRS) and 320-350 (ANEP…QDPL). Residues 255-269 (PWASKTPYNAQETRS) show a composition bias toward polar residues.

The protein localises to the nucleus. Part of the gene cluster that mediates the biosynthesis of chaetoglobosin A which has a unique inhibitory activity against actin polymerization in mammalian cells. Chaetoglobosin A and its intermediates are involved in the morphological differentiation of C.globosum. The first step of the pathway is the synthesis of prochaetoglobosin I via condensation of one acetyl-CoA, 8 malonyl-CoA, and a L-tryptophan molecule by the PKS-NRPS hybrid synthetase cheA, followed by reduction of backbone double bond to install desired geometry by the enoyl reductase cheB. Further multiple oxidation steps performed by the cytochrome P450 monooxygenases cheE and cheG, as well as by the FAD-linked oxidoreductase cheF, lead to the formation of chaetoglobosin A. Depending on the order of action of these reductases, distinct intermediates can be identified. Within the pathway, the cytochrome P450 monooxygenase cheE catalyzes a stereospecific epoxidation on prochaetoglobosin I, cytoglobosin D, and chaetoglobosin J intermediates. The FAD-linked oxidoreductase cheF performs dehydrogenation of the C-20 hydroxyl groups in the 20-dihyrochaetoglobosin A and cytoglobosin D intermediates. Finally, the cytochrome P450 monooxygenase cheG can catalyze the stereospecific dihydroxylation of prochaetoglobosin I and prochaetoglobosin IV at C-19 and C-20, respectively. The Diels-Alderase cheD may play a role in the post-PKS-NRPS biosynthetic steps catalyzing Diels-Alder cyclization. The protein is Chaetoglobosin A biosynthesis cluster protein C of Chaetomium globosum (strain ATCC 6205 / CBS 148.51 / DSM 1962 / NBRC 6347 / NRRL 1970) (Soil fungus).